An 83-amino-acid chain; its full sequence is Bowman-Birk type seed trypsin and chymotrypsin inhibitor (83 aa).

7 cysteine pairs are disulfide-bonded: Cys-18-Cys-72, Cys-19-Cys-34, Cys-22-Cys-68, Cys-24-Cys-32, Cys-42-Cys-49, Cys-46-Cys-61, and Cys-51-Cys-59.

This sequence belongs to the Bowman-Birk serine protease inhibitor family.

This Vigna unguiculata (Cowpea) protein is Bowman-Birk type seed trypsin and chymotrypsin inhibitor.